Reading from the N-terminus, the 142-residue chain is Large ribosomal subunit protein uL11 (142 aa).

The protein belongs to the universal ribosomal protein uL11 family. As to quaternary structure, part of the ribosomal stalk of the 50S ribosomal subunit. Interacts with L10 and the large rRNA to form the base of the stalk. L10 forms an elongated spine to which L12 dimers bind in a sequential fashion forming a multimeric L10(L12)X complex. One or more lysine residues are methylated.

Its function is as follows. Forms part of the ribosomal stalk which helps the ribosome interact with GTP-bound translation factors. This chain is Large ribosomal subunit protein uL11, found in Mycoplasma mycoides subsp. mycoides SC (strain CCUG 32753 / NCTC 10114 / PG1).